We begin with the raw amino-acid sequence, 919 residues long: Calcium-transporting ATPase type 2C member 1 (919 aa).

Residues 1–70 (MKVARFQKIP…NEFDISEDEP (70 aa)) are Cytoplasmic-facing. The helical transmembrane segment at 71-91 (LWKKYISQFKNPLIMLLLASA) threads the bilayer. Residues 92–104 (VISVLMHQFDDAV) are Lumenal-facing. A helical membrane pass occupies residues 105–123 (SITVAILIVVTVAFVQEYR). The Cytoplasmic segment spans residues 124-262 (SEKSLEELSK…APKTPLQKSM (139 aa)). The chain crosses the membrane as a helical span at residues 263–282 (DLLGKQLSFYSFGIIGIIML). Over 283-294 (VGWLLGKDILEM) the chain is Lumenal. A helical transmembrane segment spans residues 295-312 (FTISVSLAVAAIPEGLPI). Ca(2+) is bound by residues V303, A304, I306, and E308. Residues 313 to 699 (VVTVTLALGV…EEGKGIYNNI (387 aa)) lie on the Cytoplasmic side of the membrane. The 4-aspartylphosphate intermediate role is filled by D350. The Mg(2+) site is built by D644 and D648. The chain crosses the membrane as a helical span at residues 700 to 719 (KNFVRFQLSTSIAALTLISL). The Lumenal segment spans residues 720 to 729 (ATLMNFPNPL). A helical membrane pass occupies residues 730–750 (NAMQILWINIIMDGPPAQSLG). Residues N738 and D742 each contribute to the Ca(2+) site. Residues 751–770 (VEPVDKDVIRKPPRNWKDSI) are Cytoplasmic-facing. The chain crosses the membrane as a helical span at residues 771-793 (LTKNLILKILVSSIIIVCGTLFV). The Lumenal portion of the chain corresponds to 794–808 (FWRELRDNVITPRDT). Residues 809-828 (TMTFTCFVFFDMFNALSSRS) traverse the membrane as a helical segment. Topologically, residues 829 to 841 (QTKSVFEIGLCSN) are cytoplasmic. Residues 842-860 (RMFCYAVLGSIMGQLLVIY) traverse the membrane as a helical segment. Over 861–875 (FPPLQKVFQTESLSI) the chain is Lumenal. A helical membrane pass occupies residues 876–896 (LDLLFLLGLTSSVCIVAEIIK). The Cytoplasmic segment spans residues 897 to 919 (KVERSREKIQKHVSSTSSSFLEV).

This sequence belongs to the cation transport ATPase (P-type) (TC 3.A.3) family. Type IIA subfamily. Monomer. Homodimer. As to expression, found in most tissues except colon, thymus, spleen and leukocytes. Expressed in keratinocytes (at protein level).

It localises to the golgi apparatus. The protein localises to the trans-Golgi network membrane. Its subcellular location is the golgi stack membrane. It catalyses the reaction Ca(2+)(in) + ATP + H2O = Ca(2+)(out) + ADP + phosphate + H(+). The enzyme catalyses Mn(2+)(in) + ATP + H2O = Mn(2+)(out) + ADP + phosphate + H(+). ATP-driven pump that supplies the Golgi apparatus with Ca(2+) and Mn(2+) ions, both essential cofactors for processing and trafficking of newly synthesized proteins in the secretory pathway. Within a catalytic cycle, acquires Ca(2+) or Mn(2+) ions on the cytoplasmic side of the membrane and delivers them to the lumenal side. The transfer of ions across the membrane is coupled to ATP hydrolysis and is associated with a transient phosphorylation that shifts the pump conformation from inward-facing to outward-facing state. Plays a primary role in the maintenance of Ca(2+) homeostasis in the trans-Golgi compartment with a functional impact on Golgi and post-Golgi protein sorting as well as a structural impact on cisternae morphology. Responsible for loading the Golgi stores with Ca(2+) ions in keratinocytes, contributing to keratinocyte differentiation and epidermis integrity. Participates in Ca(2+) and Mn(2+) ions uptake into the Golgi store of hippocampal neurons and regulates protein trafficking required for neural polarity. May also play a role in the maintenance of Ca(2+) and Mn(2+) homeostasis and signaling in the cytosol while preventing cytotoxicity. This chain is Calcium-transporting ATPase type 2C member 1, found in Homo sapiens (Human).